The following is a 304-amino-acid chain: MEKNFKVAALYCFADLKHYRQLQKPLLDLCQAKDIKGTLLLAQEGINGTVAGSCAAIETLVDFITAEPAFQMPEIKYSWASKMPFHRMKVRLKKEIVTMGVDGVNPLKAVGTYVDPKDWNALIQDEETLLIDTRNDYEYAIGSFQGAVDPRIKTFREFPAWVLKHEADLKKKKKIAMFCTGGIRCEKSTAYVRELGYEQVYHLKGGILKYLETIPKEDSLWWGECFVFDERVSVKHGLEECGRELCRACRSPLNTESKLSPHYEEGVSCDACYNTRSEDDRERFRERHRQFQLSKLRAMHSHQE.

The Rhodanese domain maps to 124 to 219; it reads QDEETLLIDT…YLETIPKEDS (96 aa). The Cysteine persulfide intermediate role is filled by C179.

Belongs to the TrhO family.

It catalyses the reaction uridine(34) in tRNA + AH2 + O2 = 5-hydroxyuridine(34) in tRNA + A + H2O. Catalyzes oxygen-dependent 5-hydroxyuridine (ho5U) modification at position 34 in tRNAs. This chain is tRNA uridine(34) hydroxylase, found in Bartonella henselae (strain ATCC 49882 / DSM 28221 / CCUG 30454 / Houston 1) (Rochalimaea henselae).